We begin with the raw amino-acid sequence, 432 residues long: Histidine--tRNA ligase (432 aa).

Residues 412–432 form a disordered region; sequence TQVPLAAFPPEEGRPTYDDYA. The segment covering 422 to 432 has biased composition (basic and acidic residues); that stretch reads EEGRPTYDDYA.

Belongs to the class-II aminoacyl-tRNA synthetase family.

The protein localises to the cytoplasm. The catalysed reaction is tRNA(His) + L-histidine + ATP = L-histidyl-tRNA(His) + AMP + diphosphate + H(+). The sequence is that of Histidine--tRNA ligase from Natronomonas pharaonis (strain ATCC 35678 / DSM 2160 / CIP 103997 / JCM 8858 / NBRC 14720 / NCIMB 2260 / Gabara) (Halobacterium pharaonis).